Reading from the N-terminus, the 354-residue chain is Short-chain dehydrogenase/reductase SAT2 (354 aa).

Positions 31, 85, 201, and 233 each coordinate NADP(+).

This sequence belongs to the short-chain dehydrogenases/reductases (SDR) family.

It functions in the pathway mycotoxin biosynthesis. Its function is as follows. Short-chain dehydrogenase/reductase; part of the satratoxin SC1 cluster involved in the biosynthesis of satratoxins, trichothecene mycotoxins that are associated with human food poisonings. Satratoxins are suggested to be made by products of multiple gene clusters (SC1, SC2 and SC3) that encode 21 proteins in all, including polyketide synthases, acetyltransferases, and other enzymes expected to modify the trichothecene skeleton. SC1 encodes 10 proteins, SAT1 to SAT10. The largest are SAT8, which encodes a putative polyketide synthase (PKS) with a conventional non-reducing architecture, and SAT10, a putative protein containing four ankyrin repeats and thus may be involved in protein scaffolding. The putative short-chain reductase SAT3 may assist the PKS in some capacity. SAT6 contains a secretory lipase domain and acts probably as a trichothecene esterase. SAT5 encodes a putative acetyltransferase, and so, with SAT6, may affect endogenous protection from toxicity. The probable transcription factor SAT9 may regulate the expression of the SC1 cluster. SC2 encodes proteins SAT11 to SAT16, the largest of which encodes the putative reducing PKS SAT13. SAT11 is a cytochrome P450 monooxygenase, while SAT14 and SAT16 are probable acetyltransferases. The SC2 cluster may be regulated by the transcription factor SAT15. SC3 is a small cluster that encodes 5 proteins, SAT17 to SAT21. SAT21 is a putative MFS-type transporter which may have a role in exporting secondary metabolites. The four other proteins putatively encoded in SC3 include the taurine hydroxylase-like protein SAT17, the O-methyltransferase SAT18, the acetyltransferase SAT19, and the Cys6-type zinc finger SAT20, the latter being probably involved in regulation of SC3 expression. This chain is Short-chain dehydrogenase/reductase SAT2, found in Stachybotrys chartarum (strain CBS 109288 / IBT 7711) (Toxic black mold).